Here is a 285-residue protein sequence, read N- to C-terminus: Putative lipoprotein SCO4650 (285 aa).

A signal peptide spans 1-20 (MTGTTARRTVVSVAVSAALA). Cys21 carries the N-palmitoyl cysteine lipid modification. A lipid anchor (S-diacylglycerol cysteine) is attached at Cys21. The disordered stretch occupies residues 27-63 (GPGGSDDAGHSTGPTGSARPSASAPASSRAPALTGPS). Over residues 43–58 (SARPSASAPASSRAPA) the composition is skewed to low complexity.

It is found in the cell membrane. This Streptomyces coelicolor (strain ATCC BAA-471 / A3(2) / M145) protein is Putative lipoprotein SCO4650.